Here is a 276-residue protein sequence, read N- to C-terminus: Bis(5'-nucleosyl)-tetraphosphatase, symmetrical (276 aa).

Belongs to the Ap4A hydrolase family.

The enzyme catalyses P(1),P(4)-bis(5'-adenosyl) tetraphosphate + H2O = 2 ADP + 2 H(+). Hydrolyzes diadenosine 5',5'''-P1,P4-tetraphosphate to yield ADP. The chain is Bis(5'-nucleosyl)-tetraphosphatase, symmetrical from Psychromonas ingrahamii (strain DSM 17664 / CCUG 51855 / 37).